We begin with the raw amino-acid sequence, 227 residues long: 7-cyano-7-deazaguanine synthase (227 aa).

8-18 contributes to the ATP binding site; sequence FSGGQDSTTCL. Zn(2+) is bound by residues Cys-187, Cys-196, Cys-199, and Cys-202.

This sequence belongs to the QueC family. Zn(2+) is required as a cofactor.

It carries out the reaction 7-carboxy-7-deazaguanine + NH4(+) + ATP = 7-cyano-7-deazaguanine + ADP + phosphate + H2O + H(+). It functions in the pathway purine metabolism; 7-cyano-7-deazaguanine biosynthesis. Functionally, catalyzes the ATP-dependent conversion of 7-carboxy-7-deazaguanine (CDG) to 7-cyano-7-deazaguanine (preQ(0)). The protein is 7-cyano-7-deazaguanine synthase of Aliivibrio fischeri (strain ATCC 700601 / ES114) (Vibrio fischeri).